Here is a 277-residue protein sequence, read N- to C-terminus: 3-methyl-2-oxobutanoate hydroxymethyltransferase (277 aa).

2 residues coordinate Mg(2+): Asp-54 and Asp-93. 3-methyl-2-oxobutanoate is bound by residues 54–55 (DS), Asp-93, and Lys-122. Glu-124 provides a ligand contact to Mg(2+). Glu-191 (proton acceptor) is an active-site residue.

This sequence belongs to the PanB family. As to quaternary structure, homodecamer; pentamer of dimers. It depends on Mg(2+) as a cofactor.

It is found in the cytoplasm. It carries out the reaction 3-methyl-2-oxobutanoate + (6R)-5,10-methylene-5,6,7,8-tetrahydrofolate + H2O = 2-dehydropantoate + (6S)-5,6,7,8-tetrahydrofolate. It participates in cofactor biosynthesis; (R)-pantothenate biosynthesis; (R)-pantoate from 3-methyl-2-oxobutanoate: step 1/2. In terms of biological role, catalyzes the reversible reaction in which hydroxymethyl group from 5,10-methylenetetrahydrofolate is transferred onto alpha-ketoisovalerate to form ketopantoate. The polypeptide is 3-methyl-2-oxobutanoate hydroxymethyltransferase (Alkalilimnicola ehrlichii (strain ATCC BAA-1101 / DSM 17681 / MLHE-1)).